Consider the following 143-residue polypeptide: Putative pre-16S rRNA nuclease (143 aa).

This sequence belongs to the YqgF nuclease family.

The protein resides in the cytoplasm. In terms of biological role, could be a nuclease involved in processing of the 5'-end of pre-16S rRNA. The chain is Putative pre-16S rRNA nuclease from Mycoplasma capricolum subsp. capricolum (strain California kid / ATCC 27343 / NCTC 10154).